The primary structure comprises 115 residues: Photosystem II reaction center Psb28 protein (115 aa).

Belongs to the Psb28 family. Part of the photosystem II complex.

It is found in the plastid. The protein resides in the chloroplast thylakoid membrane. The chain is Photosystem II reaction center Psb28 protein from Cyanidium caldarium (Red alga).